A 291-amino-acid chain; its full sequence is 33 kDa chaperonin (291 aa).

Cystine bridges form between C236–C238 and C269–C272.

It belongs to the HSP33 family. In terms of processing, under oxidizing conditions two disulfide bonds are formed involving the reactive cysteines. Under reducing conditions zinc is bound to the reactive cysteines and the protein is inactive.

It is found in the cytoplasm. Its function is as follows. Redox regulated molecular chaperone. Protects both thermally unfolding and oxidatively damaged proteins from irreversible aggregation. Plays an important role in the bacterial defense system toward oxidative stress. The chain is 33 kDa chaperonin from Lactobacillus johnsonii (strain CNCM I-12250 / La1 / NCC 533).